The following is a 717-amino-acid chain: Protein Teyrha-meyrha (717 aa).

The span at F140–H152 shows a compositional bias: polar residues. Disordered regions lie at residues F140–A214, H229–V270, K440–K498, S511–P539, D563–A594, and Q624–A717. A compositionally biased stretch (low complexity) spans A195–A214. A compositionally biased stretch (basic residues) spans P235 to H263. Residues P442 to E451 show a composition bias toward basic and acidic residues. Positions E452–P466 are enriched in acidic residues. Residues E471–T482 show a composition bias toward polar residues. Residues K513–V522 are compositionally biased toward basic and acidic residues. Composition is skewed to low complexity over residues S523–S533 and N570–N580. Polar residues predominate over residues Q630 to N640. Low complexity predominate over residues N667–N686. A compositionally biased stretch (polar residues) spans P687–S704.

As to expression, in embryos, expressed specifically in M12 (at protein level).

Its subcellular location is the nucleus. Its function is as follows. Required for the correct synaptic targeting of motoneurons RP5 and V to muscle 12 (M12). May be involved in the negative regulation of Tl in M12. Involved in the correct patterning of veins in the proximal (costal) region of the wing blade. The polypeptide is Protein Teyrha-meyrha (Drosophila melanogaster (Fruit fly)).